The sequence spans 427 residues: Glucose-1-phosphate adenylyltransferase (427 aa).

Residues Y121, G186, 201–202 (EK), and S219 contribute to the alpha-D-glucose 1-phosphate site.

The protein belongs to the bacterial/plant glucose-1-phosphate adenylyltransferase family. Homotetramer.

It carries out the reaction alpha-D-glucose 1-phosphate + ATP + H(+) = ADP-alpha-D-glucose + diphosphate. Its pathway is glycan biosynthesis; glycogen biosynthesis. Its function is as follows. Involved in the biosynthesis of ADP-glucose, a building block required for the elongation reactions to produce glycogen. Catalyzes the reaction between ATP and alpha-D-glucose 1-phosphate (G1P) to produce pyrophosphate and ADP-Glc. The sequence is that of Glucose-1-phosphate adenylyltransferase from Corynebacterium diphtheriae (strain ATCC 700971 / NCTC 13129 / Biotype gravis).